Here is a 32-residue protein sequence, read N- to C-terminus: Chaperone protein DnaK (32 aa).

The protein belongs to the heat shock protein 70 family.

Acts as a chaperone. This Anabaena sp. (strain L31) protein is Chaperone protein DnaK.